Here is a 318-residue protein sequence, read N- to C-terminus: tRNA U34 carboxymethyltransferase (318 aa).

Carboxy-S-adenosyl-L-methionine contacts are provided by K88, W102, K107, G126, M192, Y196, and R311.

This sequence belongs to the class I-like SAM-binding methyltransferase superfamily. CmoB family. In terms of assembly, homotetramer.

It carries out the reaction carboxy-S-adenosyl-L-methionine + 5-hydroxyuridine(34) in tRNA = 5-carboxymethoxyuridine(34) in tRNA + S-adenosyl-L-homocysteine + H(+). Catalyzes carboxymethyl transfer from carboxy-S-adenosyl-L-methionine (Cx-SAM) to 5-hydroxyuridine (ho5U) to form 5-carboxymethoxyuridine (cmo5U) at position 34 in tRNAs. In Pseudomonas fluorescens (strain SBW25), this protein is tRNA U34 carboxymethyltransferase.